Consider the following 556-residue polypeptide: 2-succinyl-5-enolpyruvyl-6-hydroxy-3-cyclohexene-1-carboxylate synthase (556 aa).

It belongs to the TPP enzyme family. MenD subfamily. As to quaternary structure, homodimer. It depends on Mg(2+) as a cofactor. Mn(2+) serves as cofactor. Requires thiamine diphosphate as cofactor.

It catalyses the reaction isochorismate + 2-oxoglutarate + H(+) = 5-enolpyruvoyl-6-hydroxy-2-succinyl-cyclohex-3-ene-1-carboxylate + CO2. It functions in the pathway quinol/quinone metabolism; 1,4-dihydroxy-2-naphthoate biosynthesis; 1,4-dihydroxy-2-naphthoate from chorismate: step 2/7. The protein operates within quinol/quinone metabolism; menaquinone biosynthesis. In terms of biological role, catalyzes the thiamine diphosphate-dependent decarboxylation of 2-oxoglutarate and the subsequent addition of the resulting succinic semialdehyde-thiamine pyrophosphate anion to isochorismate to yield 2-succinyl-5-enolpyruvyl-6-hydroxy-3-cyclohexene-1-carboxylate (SEPHCHC). The protein is 2-succinyl-5-enolpyruvyl-6-hydroxy-3-cyclohexene-1-carboxylate synthase of Escherichia coli (strain K12 / MC4100 / BW2952).